Consider the following 254-residue polypeptide: Probable phosphatase TTE1963 (254 aa).

Zn(2+)-binding residues include H14, H16, H22, H47, E80, H108, H139, D200, and H202.

The protein belongs to the PHP family. Zn(2+) serves as cofactor.

This Caldanaerobacter subterraneus subsp. tengcongensis (strain DSM 15242 / JCM 11007 / NBRC 100824 / MB4) (Thermoanaerobacter tengcongensis) protein is Probable phosphatase TTE1963.